A 1755-amino-acid chain; its full sequence is Transposon Ty1-MR1 Gag-Pol polyprotein (1755 aa).

Polar residues-rich tracts occupy residues 1 to 31, 46 to 60, and 137 to 168; these read MESQ…TTQD, VSTQ…TPLS, and VGTH…TNQH. Disordered regions lie at residues 1 to 88, 137 to 174, and 350 to 420; these read MESQ…YPQQ, VGTH…PPPI, and QQES…IRGS. Residues 299–401 form an RNA-binding region; that stretch reads NNGIPINNKV…NSQSRTARAH (103 aa). A compositionally biased stretch (basic and acidic residues) spans 363–372; it reads SPSDEKKDSR. Positions 373–411 are enriched in polar residues; sequence TYTNTTKPKSITRNSQKPNNSQSRTARAHNVSTFNNSPG. D461 acts as the For protease activity; shared with dimeric partner in catalysis. The integrase-type zinc finger-like stretch occupies residues 583–640; it reads NVHTSESTRKYPYPFIHRMLAHANAQTIRYSLKNNTITYFNESDVDWSSAIDYQCPDC. In terms of domain architecture, Integrase catalytic spans 660–835; the sequence is NSYEPFQYLH…AGLDISTLLP (176 aa). 2 residues coordinate Mg(2+): D671 and D736. A disordered region spans residues 958–1172; sequence AVSPTDSTPP…LGGIGDSNAY (215 aa). Low complexity predominate over residues 960–969; it reads SPTDSTPPST. Residues 1005–1015 are compositionally biased toward polar residues; the sequence is STPQISDIEST. Residues 1038–1053 are compositionally biased toward basic and acidic residues; it reads ESSHASKSKDFRHSDS. 2 stretches are compositionally biased toward polar residues: residues 1054 to 1082 and 1095 to 1106; these read YSDN…QTSE and SIDTSSSESNSL. The Bipartite nuclear localization signal motif lies at 1178–1212; it reads KKRSLEDNETEIKVSRDTWNTKNMRSLEPPRSKKR. Residues 1338-1476 enclose the Reverse transcriptase Ty1/copia-type domain; that stretch reads NNYYITQLDI…DILGLEIKYQ (139 aa). Mg(2+)-binding residues include D1346, D1427, D1428, D1610, E1652, and D1685. In terms of domain architecture, RNase H Ty1/copia-type spans 1610–1752; it reads DASYGNQPYY…IKTFKLLTNK (143 aa).

In terms of assembly, the capsid protein forms a homotrimer, from which the VLPs are assembled. The protease is a homodimer, whose active site consists of two apposed aspartic acid residues. In terms of processing, initially, virus-like particles (VLPs) are composed of the structural unprocessed proteins Gag and Gag-Pol, and also contain the host initiator methionine tRNA (tRNA(i)-Met) which serves as a primer for minus-strand DNA synthesis, and a dimer of genomic Ty RNA. Processing of the polyproteins occurs within the particle and proceeds by an ordered pathway, called maturation. First, the protease (PR) is released by autocatalytic cleavage of the Gag-Pol polyprotein yielding capsid protein p45 and a Pol-p154 precursor protein. This cleavage is a prerequisite for subsequent processing of Pol-p154 at the remaining sites to release the mature structural and catalytic proteins. Maturation takes place prior to the RT reaction and is required to produce transposition-competent VLPs.

It is found in the cytoplasm. It localises to the nucleus. The enzyme catalyses DNA(n) + a 2'-deoxyribonucleoside 5'-triphosphate = DNA(n+1) + diphosphate. The catalysed reaction is Endonucleolytic cleavage to 5'-phosphomonoester.. In terms of biological role, capsid protein (CA) is the structural component of the virus-like particle (VLP), forming the shell that encapsulates the retrotransposons dimeric RNA genome. The particles are assembled from trimer-clustered units and there are holes in the capsid shells that allow for the diffusion of macromolecules. CA also has nucleocapsid-like chaperone activity, promoting primer tRNA(i)-Met annealing to the multipartite primer-binding site (PBS), dimerization of Ty1 RNA and initiation of reverse transcription. Functionally, the aspartyl protease (PR) mediates the proteolytic cleavages of the Gag and Gag-Pol polyproteins after assembly of the VLP. Its function is as follows. Reverse transcriptase/ribonuclease H (RT) is a multifunctional enzyme that catalyzes the conversion of the retro-elements RNA genome into dsDNA within the VLP. The enzyme displays a DNA polymerase activity that can copy either DNA or RNA templates, and a ribonuclease H (RNase H) activity that cleaves the RNA strand of RNA-DNA heteroduplexes during plus-strand synthesis and hydrolyzes RNA primers. The conversion leads to a linear dsDNA copy of the retrotransposon that includes long terminal repeats (LTRs) at both ends. Integrase (IN) targets the VLP to the nucleus, where a subparticle preintegration complex (PIC) containing at least integrase and the newly synthesized dsDNA copy of the retrotransposon must transit the nuclear membrane. Once in the nucleus, integrase performs the integration of the dsDNA into the host genome. The chain is Transposon Ty1-MR1 Gag-Pol polyprotein (TY1B-MR1) from Saccharomyces cerevisiae (strain ATCC 204508 / S288c) (Baker's yeast).